Consider the following 570-residue polypeptide: Nucleoprotein (570 aa).

The binding site for the cap structure m7GTP stretch occupies residues 54–241; the sequence is MRKEKRDDSD…IEPKKSAINI (188 aa). Mn(2+)-binding residues include Asp390 and Glu392. Residues Glu400, Cys507, His510, and Cys530 each contribute to the Zn(2+) site. Mn(2+) is bound at residue Asp534.

The protein belongs to the arenaviridae nucleocapsid protein family. Homomultimerizes to form the nucleocapsid. Binds to viral genomic RNA. Interacts with glycoprotein G2. Interacts with protein Z; this interaction probably directs the encapsidated genome to budding sites. Interacts with protein L; this interaction does not interfere with Z-L interaction. Interacts with host IKBKE (via Protein kinase domain); the interaction inhibits IKBKE kinase activity.

The protein resides in the virion. The protein localises to the host cytoplasm. Encapsidates the genome, protecting it from nucleases. The encapsidated genomic RNA is termed the nucleocapsid (NC). Serves as template for viral transcription and replication. The increased presence of protein N in host cell does not seem to trigger the switch from transcription to replication as observed in other negative strain RNA viruses. Through the interaction with host IKBKE, strongly inhibits the phosphorylation and nuclear translocation of host IRF3, a protein involved in interferon activation pathway, leading to the inhibition of interferon-beta and IRF3-dependent promoters activation. Also encodes a functional 3'-5' exoribonuclease that degrades preferentially dsRNA substrates and thereby participates in the suppression of interferon induction. The polypeptide is Nucleoprotein (Mopeia virus (MOPV)).